The primary structure comprises 489 residues: MTFRNCVAVDLGASSGRVMLARYERECRSLTLREIHRFKNGLHSQNGYVTWNVDSLESAIRLGLNKVCEEGIRIDSIGIDTWGVDFVLLDQQGQRVGLPVAYRDSRSNGLMAQAQQQLGKRDIYQRSGIQFLPFNTLYQLRALTEQQPELIPHIAHALLMPDYFSYRLTGKMNWEYTNATTTQLVNINSDDWDESLLAWSGANKAWFGRPTHPGNVIGHWICPQGNEIPVVAVASHDTASAVIASPLNGSRAAYLSSGTWSLMGFESQTPFTNDTALAANITNEGGAEGRYRVLKNIMGLWLLQRVLQERQINDLPALIAATQALPACRFIINPNDDRFINPEAMCSEIQAACRETAQPIPESDAELARCIFDSLALLYADVLHELAQLRGEDFSQLHIVGGGCQNTLLNQLCADACGIRVIAGPVEASTLGNIGIQLMTLDELNNVDDFRQVVSTTANLTTFTPNPDSEIAHYVAQIHSTRQTKELCA.

13–17 (ASSGR) provides a ligand contact to ATP. An intrachain disulfide couples Cys68 to Cys222. Substrate contacts are provided by residues Gly83 and 236-238 (HDT). Residue Asp237 is the Proton acceptor of the active site. Thr259 is a binding site for ATP. Asn296 lines the substrate pocket. Residue Gln304 participates in ATP binding. A disulfide bridge links Cys353 with Cys370. Gly402 is an ATP binding site. The cysteines at positions 413 and 417 are disulfide-linked.

It belongs to the rhamnulokinase family. Monomer. Mg(2+) is required as a cofactor.

The catalysed reaction is L-rhamnulose + ATP = L-rhamnulose 1-phosphate + ADP + H(+). The protein operates within carbohydrate degradation; L-rhamnose degradation; glycerone phosphate from L-rhamnose: step 2/3. Functionally, involved in the catabolism of L-rhamnose (6-deoxy-L-mannose). Catalyzes the transfer of the gamma-phosphate group from ATP to the 1-hydroxyl group of L-rhamnulose to yield L-rhamnulose 1-phosphate. The protein is Rhamnulokinase of Escherichia coli O139:H28 (strain E24377A / ETEC).